The chain runs to 291 residues: Sesquiterpene cyclase astC (291 aa).

The protein belongs to the HAD-like hydrolase superfamily.

It carries out the reaction (2E,6E)-farnesyl diphosphate = (S,S)-drim-8-en-11-yl diphosphate. The protein operates within secondary metabolite biosynthesis; terpenoid biosynthesis. In terms of biological role, sesquiterpene cyclase; part of the gene cluster that mediates the biosynthesis of astellolides, drimane-type sesquiterpene esters that show antimicrobial, anti-inflammatory, and anti-tumor activities. The first step in astellolide biosynthesis is performed by the sesquiterpene cyclase astC that catalyzes the formation of drimanyl pyrophosphate from farnesyl pyrophosphate. Drimanyl pyrophosphate is then dephosphorylated by the sesquiterpene phosphatase astI to produce drimanyl monophosphate which is further dephosphorylated to drim-8-ene-11-ol by atsK. Drim-8-ene-11-ol is converted to confertifolin, probably by the cytochrome P450 monooxygenase astD and/or the dehydrogenase astE. The cytochrome P450 monooxygenases astB, astF and astJ then hydroxylate confertifolin at C6, C14, or C15 to form trihydroxy confertifolin. The nonribosomal peptide synthetase astA catalyzes ester bond formation between trihydroxy contifolin and benzoic acid (BA) or 4-hydroxy benzoic acid (4HBA), leading to the formation of dideacetyl astellolides A and B, respectively. Finally, the O-acetyltransferase astG converts dideacetyl astellolides A and B into deacetyl astellolides A and B. The sequence is that of Sesquiterpene cyclase astC from Aspergillus oryzae (strain ATCC 42149 / RIB 40) (Yellow koji mold).